We begin with the raw amino-acid sequence, 635 residues long: 1-deoxy-D-xylulose-5-phosphate synthase (635 aa).

Thiamine diphosphate contacts are provided by residues histidine 78 and 119 to 121; that span reads GHS. Aspartate 151 lines the Mg(2+) pocket. Residues 152 to 153, asparagine 180, tyrosine 289, and glutamate 371 contribute to the thiamine diphosphate site; that span reads GA. Mg(2+) is bound at residue asparagine 180.

The protein belongs to the transketolase family. DXPS subfamily. Homodimer. Requires Mg(2+) as cofactor. Thiamine diphosphate serves as cofactor.

It carries out the reaction D-glyceraldehyde 3-phosphate + pyruvate + H(+) = 1-deoxy-D-xylulose 5-phosphate + CO2. Its pathway is metabolic intermediate biosynthesis; 1-deoxy-D-xylulose 5-phosphate biosynthesis; 1-deoxy-D-xylulose 5-phosphate from D-glyceraldehyde 3-phosphate and pyruvate: step 1/1. Functionally, catalyzes the acyloin condensation reaction between C atoms 2 and 3 of pyruvate and glyceraldehyde 3-phosphate to yield 1-deoxy-D-xylulose-5-phosphate (DXP). The sequence is that of 1-deoxy-D-xylulose-5-phosphate synthase from Bartonella tribocorum (strain CIP 105476 / IBS 506).